The following is a 339-amino-acid chain: Arylacetonitrilase (339 aa).

A CN hydrolase domain is found at 5–290 (IRVAVTQAEP…EGIVYADLDL (286 aa)). The active-site Proton acceptor is glutamate 45. Residue lysine 126 is part of the active site. Cysteine 167 functions as the Nucleophile in the catalytic mechanism.

The protein belongs to the carbon-nitrogen hydrolase superfamily. Nitrilase family.

The enzyme catalyses a nitrile + 2 H2O = a carboxylate + NH4(+). It carries out the reaction 4-chlorophenylacetonitrile + 2 H2O = 4-chlorophenylacetate + NH4(+). Nitrilase that hydrolyzes preferentially phenylacetonitrile, (R,S)-mandelonitrile, and 3-indolylacetonitrile. The chain is Arylacetonitrilase from Fusarium vanettenii (strain ATCC MYA-4622 / CBS 123669 / FGSC 9596 / NRRL 45880 / 77-13-4) (Fusarium solani subsp. pisi).